Consider the following 163-residue polypeptide: Nucleotide-binding protein BPUM_1028 (163 aa).

The protein belongs to the YajQ family.

Its function is as follows. Nucleotide-binding protein. In Bacillus pumilus (strain SAFR-032), this protein is Nucleotide-binding protein BPUM_1028.